The chain runs to 326 residues: Acetyl-coenzyme A carboxylase carboxyl transferase subunit beta (326 aa).

One can recognise a CoA carboxyltransferase N-terminal domain in the interval 29–298; it reads LWIKCEACGT…TLISDESLET (270 aa). 4 residues coordinate Zn(2+): Cys33, Cys36, Cys52, and Cys55. The C4-type zinc-finger motif lies at 33-55; that stretch reads CEACGTLTYTKDLQANQMVCPEC. The tract at residues 302-326 is disordered; that stretch reads CHLPFQAESHNLSTTDNKIQPTPQG. The segment covering 309–326 has biased composition (polar residues); it reads ESHNLSTTDNKIQPTPQG.

The protein belongs to the AccD/PCCB family. Acetyl-CoA carboxylase is a heterohexamer composed of biotin carboxyl carrier protein (AccB), biotin carboxylase (AccC) and two subunits each of ACCase subunit alpha (AccA) and ACCase subunit beta (AccD). Zn(2+) serves as cofactor.

The protein resides in the cytoplasm. The catalysed reaction is N(6)-carboxybiotinyl-L-lysyl-[protein] + acetyl-CoA = N(6)-biotinyl-L-lysyl-[protein] + malonyl-CoA. The protein operates within lipid metabolism; malonyl-CoA biosynthesis; malonyl-CoA from acetyl-CoA: step 1/1. In terms of biological role, component of the acetyl coenzyme A carboxylase (ACC) complex. Biotin carboxylase (BC) catalyzes the carboxylation of biotin on its carrier protein (BCCP) and then the CO(2) group is transferred by the transcarboxylase to acetyl-CoA to form malonyl-CoA. This chain is Acetyl-coenzyme A carboxylase carboxyl transferase subunit beta, found in Trichodesmium erythraeum (strain IMS101).